The following is a 216-amino-acid chain: Guanylate kinase (216 aa).

One can recognise a Guanylate kinase-like domain in the interval 12-191 (GLLFVISSPS…CVKQVKNILT (180 aa)). 19–26 (SPSGAGKS) is a binding site for ATP.

The protein belongs to the guanylate kinase family.

It is found in the cytoplasm. The catalysed reaction is GMP + ATP = GDP + ADP. Functionally, essential for recycling GMP and indirectly, cGMP. The polypeptide is Guanylate kinase (Zymomonas mobilis subsp. mobilis (strain ATCC 31821 / ZM4 / CP4)).